A 231-amino-acid polypeptide reads, in one-letter code: uncharacterized protein (231 aa).

A run of 7 helical transmembrane segments spans residues 26 to 46, 56 to 76, 84 to 104, 112 to 132, 142 to 162, 163 to 183, and 206 to 226; these read TYSW…LTAQ, SLRL…SMFA, AGAL…ALLF, ITAF…GFVI, FFLF…FVGS, SALS…LTAY, and INGA…LLNI.

It belongs to the BI1 family.

The protein localises to the cell membrane. This is an uncharacterized protein from Deinococcus radiodurans (strain ATCC 13939 / DSM 20539 / JCM 16871 / CCUG 27074 / LMG 4051 / NBRC 15346 / NCIMB 9279 / VKM B-1422 / R1).